Reading from the N-terminus, the 402-residue chain is Methylthioribose-1-phosphate isomerase (402 aa).

Asp275 (proton donor) is an active-site residue.

It belongs to the eIF-2B alpha/beta/delta subunits family. MtnA subfamily.

Its subcellular location is the cytoplasm. The protein resides in the nucleus. It carries out the reaction 5-(methylsulfanyl)-alpha-D-ribose 1-phosphate = 5-(methylsulfanyl)-D-ribulose 1-phosphate. Its pathway is amino-acid biosynthesis; L-methionine biosynthesis via salvage pathway; L-methionine from S-methyl-5-thio-alpha-D-ribose 1-phosphate: step 1/6. Functionally, catalyzes the interconversion of methylthioribose-1-phosphate (MTR-1-P) into methylthioribulose-1-phosphate (MTRu-1-P). The polypeptide is Methylthioribose-1-phosphate isomerase (Clavispora lusitaniae (strain ATCC 42720) (Yeast)).